A 603-amino-acid chain; its full sequence is Phosphoenolpyruvate carboxykinase [GTP] (603 aa).

Substrate-binding positions include Arg87 and 209 to 211 (YAG). Positions 218 and 237 each coordinate Mn(2+). Ser258 is a substrate binding site. 259–264 (GSGKTS) contacts GTP. Ser260 is a catalytic residue. Position 275 (Asp275) interacts with Mn(2+). 365 to 367 (NAR) serves as a coordination point for substrate. Positions 367 and 398 each coordinate GTP.

It belongs to the phosphoenolpyruvate carboxykinase [GTP] family. Mn(2+) serves as cofactor.

It localises to the cytoplasm. The catalysed reaction is oxaloacetate + GTP = phosphoenolpyruvate + GDP + CO2. Its pathway is carbohydrate biosynthesis; gluconeogenesis. Functionally, catalyzes the conversion of oxaloacetate (OAA) to phosphoenolpyruvate (PEP), the rate-limiting step in the metabolic pathway that produces glucose from lactate and other precursors derived from the citric acid cycle. The sequence is that of Phosphoenolpyruvate carboxykinase [GTP] from Saccharolobus solfataricus (strain ATCC 35092 / DSM 1617 / JCM 11322 / P2) (Sulfolobus solfataricus).